The sequence spans 1109 residues: Protein phosphatase 1 regulatory subunit 3A (1109 aa).

Phosphoserine; by GSK3 is present on residues serine 40 and serine 44. Phosphoserine; by PKA and ISPK is present on serine 48. Serine 51 carries the phosphoserine modification. Threonine 58 carries the post-translational modification Phosphothreonine. Residues arginine 64–serine 67 carry the PP1-binding motif motif. Serine 67 carries the phosphoserine; by PKA modification. The 109-residue stretch at glutamine 124 to valine 232 folds into the CBM21 domain. Basic and acidic residues predominate over residues lysine 236–serine 251. 4 disordered regions span residues lysine 236–asparagine 278, glycine 340–serine 424, aspartate 436–proline 455, and tyrosine 493–arginine 517. 3 stretches are compositionally biased toward polar residues: residues glycine 340–proline 352, lysine 360–serine 384, and tyrosine 396–proline 406. Phosphoserine is present on serine 843. Disordered regions lie at residues serine 945–lysine 985 and serine 1011–aspartate 1048. Residues tyrosine 951 to proline 963 are compositionally biased toward polar residues. Composition is skewed to basic and acidic residues over residues lysine 966 to lysine 985 and serine 1011 to glutamate 1034. Residues serine 1035 to aspartate 1048 are compositionally biased toward polar residues. The chain crosses the membrane as a helical span at residues phenylalanine 1066–alanine 1086.

Interacts with PPP1CC catalytic subunit of PP1, and associates with glycogen. Phosphorylation at Ser-48 by ISPK stimulates the dephosphorylation of glycogen synthase and phosphorylase kinase. In terms of tissue distribution, skeletal muscle, diaphragm and cardiac muscle.

It localises to the membrane. Its function is as follows. Seems to act as a glycogen-targeting subunit for PP1. PP1 is essential for cell division, and participates in the regulation of glycogen metabolism, muscle contractility and protein synthesis. Plays an important role in glycogen synthesis but is not essential for insulin activation of glycogen synthase. The protein is Protein phosphatase 1 regulatory subunit 3A (PPP1R3A) of Oryctolagus cuniculus (Rabbit).